The sequence spans 142 residues: Large ribosomal subunit protein uL13 (142 aa).

It belongs to the universal ribosomal protein uL13 family. As to quaternary structure, part of the 50S ribosomal subunit.

Its function is as follows. This protein is one of the early assembly proteins of the 50S ribosomal subunit, although it is not seen to bind rRNA by itself. It is important during the early stages of 50S assembly. The protein is Large ribosomal subunit protein uL13 of Histophilus somni (strain 129Pt) (Haemophilus somnus).